The chain runs to 775 residues: Tyrosine-protein phosphatase non-receptor type 12 (775 aa).

The residue at position 1 (methionine 1) is an N-acetylmethionine. A Phosphoserine modification is found at serine 19. The Tyrosine-protein phosphatase domain occupies 28-293; that stretch reads FARDFMRLRR…ELVHRAIAQL (266 aa). Residues aspartate 199, 231–237, and glutamine 278 each bind substrate; that span reads CSAGCGR. Residue cysteine 231 is the Phosphocysteine intermediate of the active site. The segment at 322–341 is disordered; sequence SSIDSEKQDSPPPKPPRTRS. 4 positions are modified to phosphoserine: serine 331, serine 434, serine 448, and serine 467. The segment at 344-437 is interaction with TGFB1I1; sequence VEGDAKEEIL…KLERNLSFEI (94 aa). Residues 462 to 775 are disordered; it reads KIKSASSSVV…GPREPPSEWT (314 aa). Residue threonine 519 is modified to Phosphothreonine. Phosphoserine is present on residues serine 550 and serine 567. Residues 558-573 are compositionally biased toward polar residues; the sequence is NHSQTLKTVSSTPNST. The residue at position 569 (threonine 569) is a Phosphothreonine. Position 596 is a phosphoserine (serine 596). Position 598 is a phosphothreonine (threonine 598). A phosphoserine mark is found at serine 603, serine 606, serine 608, and serine 613. Positions 622 to 640 are enriched in low complexity; it reads TSISTASATVSPASSAESA. Serine 673 carries the post-translational modification Phosphoserine. The segment covering 692–711 has biased composition (basic and acidic residues); the sequence is VRPEWHELPNQEWSEQRESE. Serine 748 is modified (phosphoserine). Residues 766 to 775 are compositionally biased toward basic and acidic residues; that stretch reads GPREPPSEWT.

It belongs to the protein-tyrosine phosphatase family. Non-receptor class 4 subfamily. Interacts with PSTPIP1 and TGFB1I1. Interacts with PTK2B/PYK2. Interacts with LPXN. Interacts with SORBS2; this interaction greatly enhances WASF1 dephosphorylation and might mediate partial translocation to focal adhesion sites. Post-translationally, phosphorylated by STK24/MST3 and this results in inhibition of its activity.

The protein localises to the cytoplasm. It is found in the cell junction. Its subcellular location is the focal adhesion. It localises to the cell projection. The protein resides in the podosome. It catalyses the reaction O-phospho-L-tyrosyl-[protein] + H2O = L-tyrosyl-[protein] + phosphate. Its function is as follows. Dephosphorylates a range of proteins, and thereby regulates cellular signaling cascades. Dephosphorylates cellular tyrosine kinases, such as ERBB2 and PTK2B/PYK2, and thereby regulates signaling via ERBB2 and PTK2B/PYK2. Selectively dephosphorylates ERBB2 phosphorylated at 'Tyr-1112', 'Tyr-1196', and/or 'Tyr-1248'. The polypeptide is Tyrosine-protein phosphatase non-receptor type 12 (Ptpn12) (Mus musculus (Mouse)).